Reading from the N-terminus, the 623-residue chain is uncharacterized protein (623 aa).

A run of 5 helical transmembrane segments spans residues 242–262 (IVLA…ITWL), 288–308 (IVSP…LDIF), 318–338 (VSMW…IALF), 361–381 (VINL…LLGV), and 387–407 (FNVS…ALAV).

It belongs to the MscS (TC 1.A.23) family.

It is found in the cell membrane. This is an uncharacterized protein from Helicobacter pylori (strain ATCC 700392 / 26695) (Campylobacter pylori).